A 483-amino-acid chain; its full sequence is 6-phosphogluconate dehydrogenase, decarboxylating (483 aa).

NADP(+) contacts are provided by residues 10–15 (GLAVMG) and 33–35 (NRT). The residue at position 38 (Lys-38) is an N6-acetyllysine. Ser-57 is modified (phosphoserine). Lys-59 carries the post-translational modification N6-acetyllysine. NADP(+) is bound by residues 75 to 77 (VKA) and Asn-103. Substrate-binding positions include Asn-103 and 129–131 (SGG). Residue Ser-129 is modified to Phosphoserine. Lys-184 (proton acceptor) is an active-site residue. Residue 187-188 (HN) coordinates substrate. Residue Glu-191 is the Proton donor of the active site. Substrate contacts are provided by Tyr-192, Lys-261, and Arg-288. Position 309 is an N6-acetyllysine (Lys-309). Residues Arg-447 and His-453 each contribute to the substrate site. Residue 478–481 (SSSY) participates in NADP(+) binding.

It belongs to the 6-phosphogluconate dehydrogenase family. Homodimer.

It localises to the cytoplasm. The catalysed reaction is 6-phospho-D-gluconate + NADP(+) = D-ribulose 5-phosphate + CO2 + NADPH. The protein operates within carbohydrate degradation; pentose phosphate pathway; D-ribulose 5-phosphate from D-glucose 6-phosphate (oxidative stage): step 3/3. Its function is as follows. Catalyzes the oxidative decarboxylation of 6-phosphogluconate to ribulose 5-phosphate and CO(2), with concomitant reduction of NADP to NADPH. The polypeptide is 6-phosphogluconate dehydrogenase, decarboxylating (PGD) (Homo sapiens (Human)).